Consider the following 120-residue polypeptide: Large ribosomal subunit protein bL20 (120 aa).

Belongs to the bacterial ribosomal protein bL20 family.

In terms of biological role, binds directly to 23S ribosomal RNA and is necessary for the in vitro assembly process of the 50S ribosomal subunit. It is not involved in the protein synthesizing functions of that subunit. The chain is Large ribosomal subunit protein bL20 from Desulforudis audaxviator (strain MP104C).